A 324-amino-acid polypeptide reads, in one-letter code: Autolytic lysozyme (324 aa).

Catalysis depends on residues Asp5 and Glu91. 5 repeat units span residues Leu212–Phe234, Gln235–Ala254, Gln255–Ile277, Gln278–Trp300, and Gln301–Asn324. Residues Leu212–Asn324 form a 5 X 23 AA tandem repeats region.

Belongs to the glycosyl hydrolase 25 family. In terms of assembly, monomer.

It is found in the secreted. Its subcellular location is the cytoplasm. It catalyses the reaction Hydrolysis of (1-&gt;4)-beta-linkages between N-acetylmuramic acid and N-acetyl-D-glucosamine residues in a peptidoglycan and between N-acetyl-D-glucosamine residues in chitodextrins.. This is Autolytic lysozyme (lyc) from Clostridium acetobutylicum (strain ATCC 824 / DSM 792 / JCM 1419 / IAM 19013 / LMG 5710 / NBRC 13948 / NRRL B-527 / VKM B-1787 / 2291 / W).